We begin with the raw amino-acid sequence, 94 residues long: Large ribosomal subunit protein bL31 (94 aa).

The disordered stretch occupies residues 64-94 (KYGMANPDEDSTKNTKSSKKETSEDSSSKGS). A compositionally biased stretch (basic and acidic residues) spans 73–94 (DSTKNTKSSKKETSEDSSSKGS).

It belongs to the bacterial ribosomal protein bL31 family. Type A subfamily. In terms of assembly, part of the 50S ribosomal subunit.

In terms of biological role, binds the 23S rRNA. In Prochlorococcus marinus (strain SARG / CCMP1375 / SS120), this protein is Large ribosomal subunit protein bL31.